The sequence spans 84 residues: MAHKKGGGSTKNGRDSNPQYLGVKAFGGQEVSAGSIIVRQRGTAFKPGKLVGIGRDHTIFALQSGKVFFRSGRNNKKFVDIIPA.

Residues 1-21 are disordered; that stretch reads MAHKKGGGSTKNGRDSNPQYL.

It belongs to the bacterial ribosomal protein bL27 family.

This Chloroherpeton thalassium (strain ATCC 35110 / GB-78) protein is Large ribosomal subunit protein bL27.